The sequence spans 548 residues: Glucose-6-phosphate isomerase (548 aa).

Residue Glu-355 is the Proton donor of the active site. Residues His-386 and Lys-514 contribute to the active site.

Belongs to the GPI family.

It localises to the cytoplasm. The catalysed reaction is alpha-D-glucose 6-phosphate = beta-D-fructose 6-phosphate. It participates in carbohydrate biosynthesis; gluconeogenesis. The protein operates within carbohydrate degradation; glycolysis; D-glyceraldehyde 3-phosphate and glycerone phosphate from D-glucose: step 2/4. Its function is as follows. Catalyzes the reversible isomerization of glucose-6-phosphate to fructose-6-phosphate. In Yersinia enterocolitica serotype O:8 / biotype 1B (strain NCTC 13174 / 8081), this protein is Glucose-6-phosphate isomerase.